Reading from the N-terminus, the 356-residue chain is tRNA N6-adenosine threonylcarbamoyltransferase (356 aa).

Fe cation contacts are provided by His115 and His119. Residues Leu138 to Gly142, Asp171, Gly184, and Asn277 contribute to the substrate site. Asp305 contributes to the Fe cation binding site.

This sequence belongs to the KAE1 / TsaD family. It depends on Fe(2+) as a cofactor.

It is found in the cytoplasm. The catalysed reaction is L-threonylcarbamoyladenylate + adenosine(37) in tRNA = N(6)-L-threonylcarbamoyladenosine(37) in tRNA + AMP + H(+). In terms of biological role, required for the formation of a threonylcarbamoyl group on adenosine at position 37 (t(6)A37) in tRNAs that read codons beginning with adenine. Is involved in the transfer of the threonylcarbamoyl moiety of threonylcarbamoyl-AMP (TC-AMP) to the N6 group of A37, together with TsaE and TsaB. TsaD likely plays a direct catalytic role in this reaction. The protein is tRNA N6-adenosine threonylcarbamoyltransferase of Polaromonas naphthalenivorans (strain CJ2).